Consider the following 1314-residue polypeptide: Angiotensin-converting enzyme (1314 aa).

The N-terminal stretch at 1 to 35 (MGAASGQRGQGPPSPLLLLWLSLLLLLLPPSPAPA) is a signal peptide. Residues 36–1265 (LDPGLQPGNF…LEPQQARVGQ (1230 aa)) are Extracellular-facing. N44, N60, N80, N117, and N166 each carry an N-linked (GlcNAc...) asparagine glycan. Peptidase M2 domains are found at residues 46-630 (SADE…LGWP) and 649-1228 (VTDE…LGWP). A disulfide bridge links C163 with C171. Position 237 (Y237) interacts with chloride. N324 carries an N-linked (GlcNAc...) asparagine glycan. A disulfide bridge connects residues C365 and C383. H396 contacts Zn(2+). The active-site Proton acceptor 1 is the E397. H400 and E424 together coordinate Zn(2+). N-linked (GlcNAc...) asparagine glycosylation occurs at N515. Catalysis depends on H526, which acts as the Proton donor 1. R535 is a binding site for chloride. C551 and C563 are disulfide-bonded. 4 N-linked (GlcNAc...) asparagine glycosylation sites follow: N683, N701, N720, and N766. C763 and C769 are joined by a disulfide. Chloride contacts are provided by R797 and Y835. N948 is a glycosylation site (N-linked (GlcNAc...) asparagine). A disulfide bridge links C963 with C981. H994 is a Zn(2+) binding site. E995 functions as the Proton acceptor 2 in the catalytic mechanism. Residues H998 and E1022 each coordinate Zn(2+). Chloride-binding residues include W1096 and R1100. Catalysis depends on H1124, which acts as the Proton donor 2. Residue R1133 participates in chloride binding. C1149 and C1161 are joined by a disulfide. The N-linked (GlcNAc...) asparagine glycan is linked to N1197. Positions 1221-1262 (HGETLGWPEYNWTPNTARSEGPFPESGRVNFLGMYLEPQQAR) are juxtamembrane stalk. The chain crosses the membrane as a helical span at residues 1266–1282 (WVLLFLGVSLLVATLGL). Topologically, residues 1283 to 1314 (THRLFSIRQHGHSLHRPHRGPQFGSEVELRHS) are cytoplasmic. The segment at 1293–1314 (GHSLHRPHRGPQFGSEVELRHS) is disordered. A Phosphoserine modification is found at S1307.

Belongs to the peptidase M2 family. As to quaternary structure, monomer and homodimer; homodimerizes following binding to an inhibitor. Interacts with calmodulin (CALM1, CALM2 or CALM3); interaction takes place in the cytoplasmic region and regulates phosphorylation and proteolytic cleavage. The cofactor is Zn(2+). It depends on chloride as a cofactor. In terms of processing, produced following proteolytic cleavage by secretase enzymes that cleave the transmembrane form in the juxtamembrane stalk region upstream of the transmembrane region. Cleavage can take place at different sites of the juxtamembrane stalk region. Post-translationally, phosphorylated by CK2 on Ser-1307; which allows membrane retention. Phosphorylated on tyrosine residues on its extracellular part, promoting cleavage by secretase enzymes and formation of the soluble form (Angiotensin-converting enzyme, soluble form). As to expression, widely expressed with dominant expression in lung and kidney.

Its subcellular location is the cell membrane. It is found in the cytoplasm. The protein localises to the secreted. It catalyses the reaction Release of a C-terminal dipeptide, oligopeptide-|-Xaa-Yaa, when Xaa is not Pro, and Yaa is neither Asp nor Glu. Thus, conversion of angiotensin I to angiotensin II, with increase in vasoconstrictor activity, but no action on angiotensin II.. The catalysed reaction is angiotensin I + H2O = L-histidyl-L-leucine + angiotensin II. The enzyme catalyses bradykinin + H2O = L-Phe-L-Arg + bradykinin(1-7). It carries out the reaction substance P + H2O = substance P(1-9) + L-Leu-L-Met-NH2. It catalyses the reaction substance P + H2O = substance P(1-8) + Gly-L-Leu-L-Met-NH2. The catalysed reaction is substance P + H2O = L-Phe-L-Phe-Gly-L-Leu-L-Met-NH2 + substance P(1-6). The enzyme catalyses neurotensin + H2O = neurotensin(1-11) + L-isoleucyl-L-leucine. It carries out the reaction goralatide + H2O = N-acetyl-L-seryl-L-aspartate + L-lysyl-L-proline. It catalyses the reaction Met-enkephalin + H2O = L-phenylalanyl-L-methionine + L-tyrosylglycylglycine. The catalysed reaction is Leu-enkephalin + H2O = L-tyrosylglycylglycine + L-phenylalanyl-L-leucine. The enzyme catalyses Met-enkephalin-Arg-Phe + H2O = L-arginyl-L-phenylalanine + Met-enkephalin. With respect to regulation, the dipeptidyl carboxypeptidase activity is strongly activated by chloride. The dipeptidyl carboxypeptidase activity is specifically inhibited by lisinopril, captopril and enalaprilat. Strongly inhibited by lisinopril and captopril. Dipeptidyl carboxypeptidase that removes dipeptides from the C-terminus of a variety of circulating hormones, such as angiotensin I, bradykinin or enkephalins, thereby playing a key role in the regulation of blood pressure, electrolyte homeostasis or synaptic plasticity. Composed of two similar catalytic domains, each possessing a functional active site, with different selectivity for substrates. Plays a major role in the angiotensin-renin system that regulates blood pressure and sodium retention by the kidney by converting angiotensin I to angiotensin II, resulting in an increase of the vasoconstrictor activity of angiotensin. Also able to inactivate bradykinin, a potent vasodilator, and therefore enhance the blood pressure response. Acts as a regulator of synaptic transmission by mediating cleavage of neuropeptide hormones, such as substance P, neurotensin or enkephalins. Catalyzes degradation of different enkephalin neuropeptides (Met-enkephalin, Leu-enkephalin, Met-enkephalin-Arg-Phe and possibly Met-enkephalin-Arg-Gly-Leu). Acts as a regulator of synaptic plasticity in the nucleus accumbens of the brain by mediating cleavage of Met-enkephalin-Arg-Phe, a strong ligand of Mu-type opioid receptor OPRM1, into Met-enkephalin. Met-enkephalin-Arg-Phe cleavage by ACE decreases activation of OPRM1, leading to long-term synaptic potentiation of glutamate release. Also acts as a regulator of hematopoietic stem cell differentiation by mediating degradation of hemoregulatory peptide N-acetyl-SDKP (AcSDKP). Acts as a regulator of cannabinoid signaling pathway by mediating degradation of hemopressin, an antagonist peptide of the cannabinoid receptor CNR1. Involved in amyloid-beta metabolism by catalyzing degradation of Amyloid-beta protein 40 and Amyloid-beta protein 42 peptides, thereby preventing plaque formation. Catalyzes cleavage of cholecystokinin (maturation of Cholecystokinin-8 and Cholecystokinin-5) and Gonadoliberin-1 (both maturation and degradation) hormones. Degradation of hemoregulatory peptide N-acetyl-SDKP (AcSDKP) and amyloid-beta proteins is mediated by the N-terminal catalytic domain, while angiotensin I and cholecystokinin cleavage is mediated by the C-terminal catalytic region. In terms of biological role, soluble form that is released in blood plasma and other body fluids following proteolytic cleavage in the juxtamembrane stalk region. Functionally, isoform produced by alternative promoter usage that is specifically expressed in spermatocytes and adult testis, and which is required for male fertility. In contrast to somatic isoforms, only contains one catalytic domain. Acts as a dipeptidyl carboxypeptidase that removes dipeptides from the C-terminus of substrates. The identity of substrates that are needed for male fertility is unknown. May also have a glycosidase activity which releases GPI-anchored proteins from the membrane by cleaving the mannose linkage in the GPI moiety. The GPIase activity was reported to be essential for the egg-binding ability of the sperm. This activity is however unclear and has been challenged by other groups, suggesting that it may be indirect. In Mesocricetus auratus (Golden hamster), this protein is Angiotensin-converting enzyme.